The sequence spans 470 residues: Siroheme synthase (470 aa).

The segment at 1 to 203 (MDYLPIFVEL…GQIQQAEKQL (203 aa)) is precorrin-2 dehydrogenase /sirohydrochlorin ferrochelatase. NAD(+) contacts are provided by residues 22–23 (EV) and 43–44 (PE). At Ser-128 the chain carries Phosphoserine. Positions 214-470 (GELALVGAGP…ISRPAVVDFA (257 aa)) are uroporphyrinogen-III C-methyltransferase. Pro-223 is a binding site for S-adenosyl-L-methionine. Catalysis depends on Asp-246, which acts as the Proton acceptor. Lys-268 functions as the Proton donor in the catalytic mechanism. S-adenosyl-L-methionine is bound by residues 299–301 (GGD), Ile-304, 329–330 (TA), Met-381, and Gly-410.

The protein in the N-terminal section; belongs to the precorrin-2 dehydrogenase / sirohydrochlorin ferrochelatase family. It in the C-terminal section; belongs to the precorrin methyltransferase family.

The catalysed reaction is uroporphyrinogen III + 2 S-adenosyl-L-methionine = precorrin-2 + 2 S-adenosyl-L-homocysteine + H(+). It carries out the reaction precorrin-2 + NAD(+) = sirohydrochlorin + NADH + 2 H(+). It catalyses the reaction siroheme + 2 H(+) = sirohydrochlorin + Fe(2+). It participates in cofactor biosynthesis; adenosylcobalamin biosynthesis; precorrin-2 from uroporphyrinogen III: step 1/1. It functions in the pathway cofactor biosynthesis; adenosylcobalamin biosynthesis; sirohydrochlorin from precorrin-2: step 1/1. Its pathway is porphyrin-containing compound metabolism; siroheme biosynthesis; precorrin-2 from uroporphyrinogen III: step 1/1. The protein operates within porphyrin-containing compound metabolism; siroheme biosynthesis; siroheme from sirohydrochlorin: step 1/1. It participates in porphyrin-containing compound metabolism; siroheme biosynthesis; sirohydrochlorin from precorrin-2: step 1/1. Functionally, multifunctional enzyme that catalyzes the SAM-dependent methylations of uroporphyrinogen III at position C-2 and C-7 to form precorrin-2 via precorrin-1. Then it catalyzes the NAD-dependent ring dehydrogenation of precorrin-2 to yield sirohydrochlorin. Finally, it catalyzes the ferrochelation of sirohydrochlorin to yield siroheme. The protein is Siroheme synthase of Photorhabdus laumondii subsp. laumondii (strain DSM 15139 / CIP 105565 / TT01) (Photorhabdus luminescens subsp. laumondii).